A 152-amino-acid chain; its full sequence is UPF0179 protein Mlab_1307 (152 aa).

This sequence belongs to the UPF0179 family.

The chain is UPF0179 protein Mlab_1307 from Methanocorpusculum labreanum (strain ATCC 43576 / DSM 4855 / Z).